We begin with the raw amino-acid sequence, 297 residues long: MGDIFHIPVLLEDVINLVETIYLDDGFVFVDCTLGEGGHSKAVLSKYQNINVIGIERDDVVLNRAKESLVEFSKRISYSNTWFDDFFCKYSLHRRFNFILADLGISMFHYKVAGRGFSFLEDEKLDMRLFPSDGGISAYDIVNTFDKEMLENLIYELGGEYYSRRIVKAILEYRKINKIQTSRELQRIICKAYPNVKFKINPATKTFQALRIYVNDELDRLKRSLPLWIANLSKNGILAIITFHSLEDKIVKEFFKGLTKDKYCILTKKPITSSFKEKQYNNASRSAKLRAVKKLYE.

S-adenosyl-L-methionine-binding positions include 37–39 (GGH), Glu56, Phe87, Asp102, and His109.

This sequence belongs to the methyltransferase superfamily. RsmH family.

It localises to the cytoplasm. It carries out the reaction cytidine(1402) in 16S rRNA + S-adenosyl-L-methionine = N(4)-methylcytidine(1402) in 16S rRNA + S-adenosyl-L-homocysteine + H(+). In terms of biological role, specifically methylates the N4 position of cytidine in position 1402 (C1402) of 16S rRNA. The protein is Ribosomal RNA small subunit methyltransferase H of Borrelia recurrentis (strain A1).